Reading from the N-terminus, the 55-residue chain is Large ribosomal subunit protein bL33B (55 aa).

It belongs to the bacterial ribosomal protein bL33 family.

The protein is Large ribosomal subunit protein bL33B of Kineococcus radiotolerans (strain ATCC BAA-149 / DSM 14245 / SRS30216).